The chain runs to 165 residues: AP-3 complex subunit sigma (165 aa).

It belongs to the adaptor complexes small subunit family. In terms of assembly, adaptor protein complex 3 (AP-3) is a heterotetramer composed of 2 large adaptins (apl5 and apl6), a medium adaptin (apm3) and a small adaptin (aps3).

It is found in the golgi apparatus. The protein localises to the cytoplasmic vesicle membrane. In terms of biological role, part of the AP-3 complex, an adaptor-related complex which is not clathrin-associated. The complex is associated with the Golgi region as well as more peripheral structures. It facilitates the budding of vesicles from the Golgi membrane and may be directly involved in trafficking to the vacuole. This Schizosaccharomyces pombe (strain 972 / ATCC 24843) (Fission yeast) protein is AP-3 complex subunit sigma (aps3).